The primary structure comprises 693 residues: Elongation factor G (693 aa).

The region spanning 8–282 (EKTRNIGIMA…AVIDYLPSPL (275 aa)) is the tr-type G domain. Residues 17 to 24 (AHVDAGKT), 81 to 85 (DTPGH), and 135 to 138 (NKMD) contribute to the GTP site.

It belongs to the TRAFAC class translation factor GTPase superfamily. Classic translation factor GTPase family. EF-G/EF-2 subfamily.

It localises to the cytoplasm. In terms of biological role, catalyzes the GTP-dependent ribosomal translocation step during translation elongation. During this step, the ribosome changes from the pre-translocational (PRE) to the post-translocational (POST) state as the newly formed A-site-bound peptidyl-tRNA and P-site-bound deacylated tRNA move to the P and E sites, respectively. Catalyzes the coordinated movement of the two tRNA molecules, the mRNA and conformational changes in the ribosome. This Streptococcus pneumoniae serotype 2 (strain D39 / NCTC 7466) protein is Elongation factor G.